The sequence spans 255 residues: Cathepsin G (255 aa).

The N-terminal stretch at 1–18 (MQPLLLLLAFLLPTGAEA) is a signal peptide. A propeptide spans 19-20 (GE) (activation peptide). Residues 21 to 25 (IIGGR) form an important for antimicrobial activity region. One can recognise a Peptidase S1 domain in the interval 21-243 (IIGGRESRPH…FLPWIRTTMR (223 aa)). Cys49 and Cys65 form a disulfide bridge. The Charge relay system role is filled by His64. An N-linked (GlcNAc...) (complex) asparagine; alternate glycan is attached at Asn71. The N-linked (GlcNAc...) (paucimannose) asparagine; alternate glycan is linked to Asn71. Positions 97-111 (HPQYNQRTIQNDIML) are important for antimicrobial activity. Asp108 (charge relay system) is an active-site residue. 2 cysteine pairs are disulfide-bonded: Cys142/Cys207 and Cys172/Cys186. Ser201 functions as the Charge relay system in the catalytic mechanism. Residues 245–255 (FKLLDQMETPL) constitute a propeptide that is removed on maturation.

This sequence belongs to the peptidase S1 family. As to quaternary structure, (Microbial infection) Interacts with CASP4; the interaction is promoted by the Td92 surface protein of the periodontal pathogen T.denticola and leads to CASP4 activation. (Microbial infection) Interacts with M.tuberculosis protein Rv3364c. In terms of assembly, (Microbial infection) Interacts with S.aureus EapH1; EapH1 acts as a reversible inhibitor of CATG activity. In terms of processing, two C-terminal truncation variants have been identified, one which ends at Arg-243 and one which ends at Ser-244. Expressed in neutrophils (at protein level). Expressed in B cells.

The protein localises to the cell membrane. It localises to the cytoplasmic granule. Its subcellular location is the secreted. It is found in the cytoplasm. The protein resides in the cytosol. The protein localises to the lysosome. It localises to the nucleus. The catalysed reaction is Specificity similar to chymotrypsin C.. With respect to regulation, inhibited by soybean trypsin inhibitor, benzamidine, the synthetic peptide R13K, Z-Gly-Leu-Phe-CH2Cl, phenylmethylsulfonyl fluoride, 3,4-dichloroisocoumarin, DFP, SBTI and alpha-1-antitrypsin. Inhibited by LPS from P.aeruginosa but not by LPS from S.minnesota. Not inhibited by elastinal, CMK, TLCK, ETDA or leupeptin. (Microbial infection) Inhibited reversibly by S.aureus EapH1. Its activity is regulated as follows. (Microbial infection) Activity is induced by the Td92 surface protein of the periodontal pathogen T.denticola. Functionally, serine protease with trypsin- and chymotrypsin-like specificity. Also displays antibacterial activity against Gram-negative and Gram-positive bacteria independent of its protease activity. Prefers Phe and Tyr residues in the P1 position of substrates but also cleaves efficiently after Trp and Leu. Shows a preference for negatively charged amino acids in the P2' position and for aliphatic amino acids both upstream and downstream of the cleavage site. Required for recruitment and activation of platelets which is mediated by the F2RL3/PAR4 platelet receptor. Binds reversibly to and stimulates B cells and CD4(+) and CD8(+) T cells. Also binds reversibly to natural killer (NK) cells and enhances NK cell cytotoxicity through its protease activity. Cleaves complement C3. Cleaves vimentin. Cleaves thrombin receptor F2R/PAR1 and acts as either an agonist or an inhibitor, depending on the F2R cleavage site. Cleavage of F2R at '41-Arg-|-Ser-42' results in receptor activation while cleavage at '55-Phe-|-Trp-56' results in inhibition of receptor activation. Cleaves the synovial mucin-type protein PRG4/lubricin. Cleaves and activates IL36G which promotes expression of chemokines CXCL1 and CXLC8 in keratinocytes. Cleaves IL33 into mature forms which have greater activity than the unprocessed form. Cleaves coagulation factor F8 to produce a partially activated form. Also cleaves and activates coagulation factor F10. Cleaves leukocyte cell surface protein SPN/CD43 to release its extracellular domain and trigger its intramembrane proteolysis by gamma-secretase, releasing the CD43 cytoplasmic tail chain (CD43-ct) which translocates to the nucleus. Cleaves CCL5/RANTES to produce RANTES(4-68) lacking the N-terminal three amino acids which exhibits reduced chemotactic and antiviral activities. During apoptosis, cleaves SMARCA2/BRM to produce a 160 kDa cleavage product which localizes to the cytosol. Cleaves myelin basic protein MBP in B cell lysosomes at '224-Phe-|-Lys-225' and '248-Phe-|-Ser-249', degrading the major immunogenic MBP epitope and preventing the activation of MBP-specific autoreactive T cells. Cleaves annexin ANXA1 and antimicrobial peptide CAMP to produce peptides which act on neutrophil N-formyl peptide receptors to enhance the release of CXCL2. Acts as a ligand for the N-formyl peptide receptor FPR1, enhancing phagocyte chemotaxis. Has antibacterial activity against the Gram-negative bacteria N.gonorrhoeae and P.aeruginosa. Likely to act against N.gonorrhoeae by interacting with N.gonorrhoeae penA/PBP2. Exhibits potent antimicrobial activity against the Gram-positive bacterium L.monocytogenes. Has antibacterial activity against the Gram-positive bacterium S.aureus and degrades S.aureus biofilms, allowing polymorphonuclear leukocytes to penetrate the biofilm and phagocytose bacteria. Has antibacterial activity against M.tuberculosis. Mediates CASP4 activation induced by the Td92 surface protein of the periodontal pathogen T.denticola, causing production and secretion of IL1A and leading to pyroptosis of gingival fibroblasts. Induces platelet aggregation which is strongly potentiated in the presence of ELANE. The protein is Cathepsin G (CTSG) of Homo sapiens (Human).